The primary structure comprises 999 residues: MEEAHLLPAADVLRRFSVTAEGGLSPAQVTRARERYGPNELPTEEGKSLWELVLEQFEDLLVRILLLAALVSFVLACFEEGEETTTAFVEPLVIVLILVANAVVGVWQERNAENAIEALKEYEPEMGKVIRSDRKGVQRIRARDIVPGDIVEVAVGDKVPADLRLIEIKSTTLRVDQSILTGESVSVTKHTDAIPDPRAVNQDKKNMLFSGTNIASGKAVGVAVATGLHTELGKIRNQMASVEPERTPLQQKLDEFGRQLSRAISVICMAVWVINIGHFADPAHGGSWLRGAVYYFKIAVALAVAAIPEGLPAVITTCLALGTRRMARKNAIVRSLPSVETLGCTSVICSDKTGTLTTNQMSVCRMFVVAEAEAGTCRLHEFTISGTTYAPEGEVRQGEQPVRCGKFDGLVELATICALCNDSALDYNEAKGVYEKVGEATETALTCLVEKMNVFDTDLQALSRVERAGACNAVIKQLMRKEFTLEFSRDRKSMSVYCTPTRPGLVAQGSKMFVKGAPESVIERCSSVRVGSRTVPLNTTSREQILAKVRDWGSGSDTLRCLALATRDAPPRKEAMQLDDCSKFVQYETDLTFVGCVGMLDPPRPEVASCIARCRQAGIRVVMITGDNKGTAVAICRRLGILEDTEDVVGKAYTGREFDDLSPEQQRHACRTARCFARVEPAHKSRIVENLQSFNEVTAMTGDGVNDAPALKKAEIGIAMGSGTAVAKSAAEMVLSDDNFASIVAAVEEGRAIYSNMKQFIRYLISSNVGEVVCIFLTAILGLPEALIPVQLLWVNLVTDGLPATALGFNPPDLDIMEKRPRNPREALISGWLFFRYLAIGVYVGLATVAAATWWFLYDAEGPQVTFYQLRNFLKCSEDNPLFTGTDCEVFESRFPTTMALSVLVTTEMCNALNSVSENQSLLRMPPWLNPWLLAAVAMSMALHFLILLVPPLPLIFQVTPLSGRQWVVVLQISLPVILLDEALKYLSRKHVDEEKGRQ.

The residue at position 1 (methionine 1) is an N-acetylmethionine. The Cytoplasmic portion of the chain corresponds to 1–48 (MEEAHLLPAADVLRRFSVTAEGGLSPAQVTRARERYGPNELPTEEGKS). Residue serine 17 is modified to Phosphoserine. The residue at position 19 (threonine 19) is a Phosphothreonine. The residue at position 25 (serine 25) is a Phosphoserine. Residues 49–69 (LWELVLEQFEDLLVRILLLAA) traverse the membrane as a helical segment. Residues 70 to 89 (LVSFVLACFEEGEETTTAFV) lie on the Extracellular side of the membrane. The chain crosses the membrane as a helical span at residues 90–110 (EPLVIVLILVANAVVGVWQER). Residues 111–253 (NAENAIEALK…PERTPLQQKL (143 aa)) are Cytoplasmic-facing. Residues 254–273 (DEFGRQLSRAISVICMAVWV) traverse the membrane as a helical segment. The Extracellular segment spans residues 274-295 (INIGHFADPAHGGSWLRGAVYY). Residues 296–313 (FKIAVALAVAAIPEGLPA) form a helical membrane-spanning segment. Ca(2+) is bound by residues valine 304, alanine 305, isoleucine 307, and glutamate 309. Topologically, residues 314–757 (VITTCLALGT…EEGRAIYSNM (444 aa)) are cytoplasmic. The active-site 4-aspartylphosphate intermediate is the aspartate 351. Positions 351 and 353 each coordinate Mg(2+). An ATP-binding site is contributed by threonine 353. The interaction with phospholamban 1 stretch occupies residues 370 to 400 (AEAEAGTCRLHEFTISGTTYAPEGEVRQGEQ). Position 415 is a phosphothreonine (threonine 415). The ATP site is built by glutamate 442, arginine 489, lysine 515, arginine 560, threonine 625, glycine 626, and aspartate 627. Serine 662 carries the phosphoserine modification. ATP is bound by residues arginine 678 and lysine 684. Residue aspartate 703 participates in Mg(2+) binding. Asparagine 706 is a binding site for ATP. Residues 758 to 777 (KQFIRYLISSNVGEVVCIFL) traverse the membrane as a helical segment. Ca(2+) contacts are provided by asparagine 768 and glutamate 771. Over 778-787 (TAILGLPEAL) the chain is Extracellular. A helical transmembrane segment spans residues 788–808 (IPVQLLWVNLVTDGLPATALG). Residues 788–808 (IPVQLLWVNLVTDGLPATALG) form an interaction with phospholamban 2 region. Residues asparagine 796, threonine 799, and aspartate 800 each coordinate Ca(2+). Over 809 to 828 (FNPPDLDIMEKRPRNPREAL) the chain is Cytoplasmic. Residues 829 to 851 (ISGWLFFRYLAIGVYVGLATVAA) form a helical membrane-spanning segment. The Extracellular portion of the chain corresponds to 852 to 897 (ATWWFLYDAEGPQVTFYQLRNFLKCSEDNPLFTGTDCEVFESRFPT). Cysteines 876 and 888 form a disulfide. Residues 898–917 (TMALSVLVTTEMCNALNSVS) traverse the membrane as a helical segment. Glutamate 908 contributes to the Ca(2+) binding site. Topologically, residues 918-930 (ENQSLLRMPPWLN) are cytoplasmic. The helical transmembrane segment at 931 to 949 (PWLLAAVAMSMALHFLILL) threads the bilayer. The Extracellular segment spans residues 950–964 (VPPLPLIFQVTPLSG). Residues 965–985 (RQWVVVLQISLPVILLDEALK) traverse the membrane as a helical segment. Residues 986–999 (YLSRKHVDEEKGRQ) are Cytoplasmic-facing.

Belongs to the cation transport ATPase (P-type) (TC 3.A.3) family. Type IIA subfamily. Interacts with sarcolipin (SLN). Interacts with phospholamban (PLN). Interacts with myoregulin (MRLN). Interacts with DWORF. Interacts with VMP1. Interacts with TUNAR; the interaction occurs at low levels in low glucose conditions and is increased by high glucose levels. The cofactor is Mg(2+). As to expression, expressed in endothelial tissues.

It localises to the endoplasmic reticulum membrane. It is found in the sarcoplasmic reticulum membrane. It carries out the reaction Ca(2+)(in) + ATP + H2O = Ca(2+)(out) + ADP + phosphate + H(+). With respect to regulation, inhibited by sarcolipin (SLN), phospholamban (PLN) and myoregulin (MRLN). Enhanced by DWORF; DWORF increases activity by displacing sarcolipin (SLN), phospholamban (PLN) and myoregulin (MRLN). Its function is as follows. This magnesium-dependent enzyme catalyzes the hydrolysis of ATP coupled with the transport of calcium. Transports calcium ions from the cytosol into the sarcoplasmic/endoplasmic reticulum lumen. Contributes to calcium sequestration involved in muscular excitation/contraction. The chain is Sarcoplasmic/endoplasmic reticulum calcium ATPase 3 (ATP2A3) from Sus scrofa (Pig).